We begin with the raw amino-acid sequence, 79 residues long: Acyl carrier protein (79 aa).

In terms of domain architecture, Carrier spans 2–77 (DNIEQRVKKI…QAIDYARANV (76 aa)). At serine 37 the chain carries O-(pantetheine 4'-phosphoryl)serine.

Belongs to the acyl carrier protein (ACP) family. Post-translationally, 4'-phosphopantetheine is transferred from CoA to a specific serine of apo-ACP by AcpS. This modification is essential for activity because fatty acids are bound in thioester linkage to the sulfhydryl of the prosthetic group.

Its subcellular location is the cytoplasm. The protein operates within lipid metabolism; fatty acid biosynthesis. Carrier of the growing fatty acid chain in fatty acid biosynthesis. The polypeptide is Acyl carrier protein (Burkholderia cenocepacia (strain HI2424)).